A 536-amino-acid chain; its full sequence is Membrane protein insertase YidC (536 aa).

The chain crosses the membrane as a helical span at residues Ala-5–Pro-25. The disordered stretch occupies residues Ala-30–Val-54. Positions Pro-31–Val-54 are enriched in low complexity. Transmembrane regions (helical) follow at residues Tyr-350 to His-370, Leu-420 to Ile-440, Leu-454 to Gln-474, and Pro-494 to Val-514.

This sequence belongs to the OXA1/ALB3/YidC family. Type 1 subfamily. As to quaternary structure, interacts with the Sec translocase complex via SecD. Specifically interacts with transmembrane segments of nascent integral membrane proteins during membrane integration.

It is found in the cell inner membrane. Functionally, required for the insertion and/or proper folding and/or complex formation of integral membrane proteins into the membrane. Involved in integration of membrane proteins that insert both dependently and independently of the Sec translocase complex, as well as at least some lipoproteins. Aids folding of multispanning membrane proteins. The chain is Membrane protein insertase YidC from Geobacter metallireducens (strain ATCC 53774 / DSM 7210 / GS-15).